The sequence spans 397 residues: Tryptophan synthase beta chain (397 aa).

An N6-(pyridoxal phosphate)lysine modification is found at K86.

This sequence belongs to the TrpB family. In terms of assembly, tetramer of two alpha and two beta chains. Pyridoxal 5'-phosphate is required as a cofactor.

It catalyses the reaction (1S,2R)-1-C-(indol-3-yl)glycerol 3-phosphate + L-serine = D-glyceraldehyde 3-phosphate + L-tryptophan + H2O. The protein operates within amino-acid biosynthesis; L-tryptophan biosynthesis; L-tryptophan from chorismate: step 5/5. The beta subunit is responsible for the synthesis of L-tryptophan from indole and L-serine. The polypeptide is Tryptophan synthase beta chain (trpB) (Buchnera aphidicola subsp. Diuraphis noxia).